The chain runs to 331 residues: L-lactate dehydrogenase A chain (331 aa).

NAD(+) contacts are provided by residues 29-57 (GMVG…MEDK) and arginine 98. Arginine 105, asparagine 137, and arginine 168 together coordinate substrate. Residue asparagine 137 coordinates NAD(+). The active-site Proton acceptor is the histidine 192. Residue threonine 247 participates in substrate binding.

It belongs to the LDH/MDH superfamily. LDH family. As to quaternary structure, homotetramer.

Its subcellular location is the cytoplasm. It carries out the reaction (S)-lactate + NAD(+) = pyruvate + NADH + H(+). The protein operates within fermentation; pyruvate fermentation to lactate; (S)-lactate from pyruvate: step 1/1. Its function is as follows. Interconverts simultaneously and stereospecifically pyruvate and lactate with concomitant interconversion of NADH and NAD(+). The polypeptide is L-lactate dehydrogenase A chain (ldha) (Chaenocephalus aceratus (Blackfin icefish)).